A 130-amino-acid polypeptide reads, in one-letter code: Small ribosomal subunit protein bS6 (130 aa).

Positions 100-130 are disordered; it reads SPMVKAKDERRERREDFAEAGDDVDAGDSEE. Residues 104–116 are compositionally biased toward basic and acidic residues; it reads KAKDERRERREDF. The segment covering 117-130 has biased composition (acidic residues); the sequence is AEAGDDVDAGDSEE.

The protein belongs to the bacterial ribosomal protein bS6 family.

In terms of biological role, binds together with bS18 to 16S ribosomal RNA. This chain is Small ribosomal subunit protein bS6, found in Pectobacterium carotovorum subsp. carotovorum (strain PC1).